The chain runs to 116 residues: MNSFMVMIMLTLTLSSIMALLAFWLPIMKPDSEKLSPYECGFDPQGSARLPFSLRFFLVAILFLLFDLEIALLLPSPWATNISNPEFTLLWASLFVLLLTLGLIYEWLQGGLDWAE.

A run of 3 helical transmembrane segments spans residues 4–24 (FMVM…LAFW), 56–76 (FFLV…LLPS), and 87–107 (FTLL…IYEW).

It belongs to the complex I subunit 3 family.

The protein localises to the mitochondrion membrane. It carries out the reaction a ubiquinone + NADH + 5 H(+)(in) = a ubiquinol + NAD(+) + 4 H(+)(out). Functionally, core subunit of the mitochondrial membrane respiratory chain NADH dehydrogenase (Complex I) that is believed to belong to the minimal assembly required for catalysis. Complex I functions in the transfer of electrons from NADH to the respiratory chain. The immediate electron acceptor for the enzyme is believed to be ubiquinone. This chain is NADH-ubiquinone oxidoreductase chain 3 (MT-ND3), found in Petromyzon marinus (Sea lamprey).